We begin with the raw amino-acid sequence, 235 residues long: BPI fold-containing family A member 2 (235 aa).

The N-terminal stretch at 1 to 20 (MFQLGSLVVLCGLLIGNSES) is a signal peptide. Cysteines 161 and 204 form a disulfide.

This sequence belongs to the BPI/LBP/Plunc superfamily. Plunc family. As to expression, predominates in the parotid glands, present in smaller amounts (1/10) in the submaxillary glands and in the sublingual glands, and at lower amount in the pancreas but undetectable in the liver. Found also in lacrimal gland.

The protein resides in the secreted. Has strong antibacterial activity against P.aeruginosa. The protein is BPI fold-containing family A member 2 (Bpifa2) of Mus musculus (Mouse).